A 134-amino-acid chain; its full sequence is Putative pre-16S rRNA nuclease (134 aa).

This sequence belongs to the YqgF nuclease family.

It is found in the cytoplasm. Functionally, could be a nuclease involved in processing of the 5'-end of pre-16S rRNA. In Helicobacter pylori (strain J99 / ATCC 700824) (Campylobacter pylori J99), this protein is Putative pre-16S rRNA nuclease.